Reading from the N-terminus, the 227-residue chain is PKHD-type hydroxylase Bcep18194_B0892 (227 aa).

One can recognise a Fe2OG dioxygenase domain in the interval Lys-78–Ser-178. Fe cation is bound by residues His-96, Asp-98, and His-159. Arg-169 is a binding site for 2-oxoglutarate.

Fe(2+) is required as a cofactor. Requires L-ascorbate as cofactor.

The polypeptide is PKHD-type hydroxylase Bcep18194_B0892 (Burkholderia lata (strain ATCC 17760 / DSM 23089 / LMG 22485 / NCIMB 9086 / R18194 / 383)).